The primary structure comprises 234 residues: Sugar fermentation stimulation protein homolog (234 aa).

Belongs to the SfsA family.

The protein is Sugar fermentation stimulation protein homolog of Shewanella loihica (strain ATCC BAA-1088 / PV-4).